The primary structure comprises 561 residues: Acyl-CoA ligase frbB (561 aa).

Residues 213–221 (TSGTSGAQK), 354–359 (PGWGLT), Asp-437, Arg-456, and Lys-551 contribute to the ATP site. The SBD1 stretch occupies residues 284-354 (DLKRVLGSIA…TLRPKWHLQP (71 aa)). The interval 355–417 (GWGLTEGGGA…MKSPSVIAGY (63 aa)) is SBD2.

Belongs to the ATP-dependent AMP-binding enzyme family.

The protein operates within antifungal biosynthesis. Its function is as follows. Acyl-CoA ligase; part of the gene cluster that mediates the biosynthesis of the antifungal antibiotic FR901469, an inhibitor of beta-1,3-glucansynthase, exerting antifungal activity against the pathogenes Candida albicans and Aspergillus fumigatus. FR901469 is a cyclic depsipeptide containing 12 amino acid residues and a fatty acid chain. The NRPS frbI contains 12 modules responsible for the formation of the depsipeptide backbone which is denoted as Acyl-Thr-Ala-Tyr-Val-4OHPro-Thr-Thr-3OHPro-threo3OHGln-Gly-Thr-Orn-OH (C71H116N14O23). The PKS frbB is probably involved in the production of the hydrocarbon chain, and the acyl-CoA ligase frbC might be involved in the transport of the chain to the peptide ptoduct of frbI. Because FR901469 contains 3 hydroxylated amino acid residues, the 3 oxygenases frbA, frbH, and frbJ might be participating in amino acid hydroxylation. As no thioesterase domains were detected in frbI or frbB, the thioesterases frbD and frbE may instead release and cyclize the products of the NRPS and PKS, respectively. The chain is Acyl-CoA ligase frbB from Dothideomycetidae sp. (strain 11243) (Fungal sp. (strain No.11243)).